A 321-amino-acid chain; its full sequence is Ribosomal protein L11 methyltransferase (321 aa).

S-adenosyl-L-methionine-binding residues include T150, G171, D193, and N256.

Belongs to the methyltransferase superfamily. PrmA family.

It is found in the cytoplasm. The catalysed reaction is L-lysyl-[protein] + 3 S-adenosyl-L-methionine = N(6),N(6),N(6)-trimethyl-L-lysyl-[protein] + 3 S-adenosyl-L-homocysteine + 3 H(+). Its function is as follows. Methylates ribosomal protein L11. The protein is Ribosomal protein L11 methyltransferase of Herpetosiphon aurantiacus (strain ATCC 23779 / DSM 785 / 114-95).